A 211-amino-acid polypeptide reads, in one-letter code: Thiamine-phosphate synthase (211 aa).

Residues 37–41 (QLRIK) and asparagine 69 each bind 4-amino-2-methyl-5-(diphosphooxymethyl)pyrimidine. Mg(2+)-binding residues include aspartate 70 and aspartate 89. Serine 108 contributes to the 4-amino-2-methyl-5-(diphosphooxymethyl)pyrimidine binding site. 134–136 (TQT) serves as a coordination point for 2-[(2R,5Z)-2-carboxy-4-methylthiazol-5(2H)-ylidene]ethyl phosphate. Lysine 137 contributes to the 4-amino-2-methyl-5-(diphosphooxymethyl)pyrimidine binding site. Residues glycine 166 and 186–187 (VS) each bind 2-[(2R,5Z)-2-carboxy-4-methylthiazol-5(2H)-ylidene]ethyl phosphate.

Belongs to the thiamine-phosphate synthase family. The cofactor is Mg(2+).

It catalyses the reaction 2-[(2R,5Z)-2-carboxy-4-methylthiazol-5(2H)-ylidene]ethyl phosphate + 4-amino-2-methyl-5-(diphosphooxymethyl)pyrimidine + 2 H(+) = thiamine phosphate + CO2 + diphosphate. The enzyme catalyses 2-(2-carboxy-4-methylthiazol-5-yl)ethyl phosphate + 4-amino-2-methyl-5-(diphosphooxymethyl)pyrimidine + 2 H(+) = thiamine phosphate + CO2 + diphosphate. It carries out the reaction 4-methyl-5-(2-phosphooxyethyl)-thiazole + 4-amino-2-methyl-5-(diphosphooxymethyl)pyrimidine + H(+) = thiamine phosphate + diphosphate. It participates in cofactor biosynthesis; thiamine diphosphate biosynthesis; thiamine phosphate from 4-amino-2-methyl-5-diphosphomethylpyrimidine and 4-methyl-5-(2-phosphoethyl)-thiazole: step 1/1. Its function is as follows. Condenses 4-methyl-5-(beta-hydroxyethyl)thiazole monophosphate (THZ-P) and 2-methyl-4-amino-5-hydroxymethyl pyrimidine pyrophosphate (HMP-PP) to form thiamine monophosphate (TMP). The sequence is that of Thiamine-phosphate synthase from Shigella sonnei (strain Ss046).